The primary structure comprises 251 residues: Hydroxyacylglutathione hydrolase (251 aa).

His53, His55, Asp57, His58, His110, Asp127, and His165 together coordinate Zn(2+).

Belongs to the metallo-beta-lactamase superfamily. Glyoxalase II family. Monomer. It depends on Zn(2+) as a cofactor.

It carries out the reaction an S-(2-hydroxyacyl)glutathione + H2O = a 2-hydroxy carboxylate + glutathione + H(+). Its pathway is secondary metabolite metabolism; methylglyoxal degradation; (R)-lactate from methylglyoxal: step 2/2. Its function is as follows. Thiolesterase that catalyzes the hydrolysis of S-D-lactoyl-glutathione to form glutathione and D-lactic acid. This is Hydroxyacylglutathione hydrolase from Escherichia coli O6:K15:H31 (strain 536 / UPEC).